The primary structure comprises 202 residues: Putative 3-methyladenine DNA glycosylase (202 aa).

Belongs to the DNA glycosylase MPG family.

The polypeptide is Putative 3-methyladenine DNA glycosylase (Staphylococcus haemolyticus (strain JCSC1435)).